A 434-amino-acid chain; its full sequence is Tol-Pal system protein TolB (434 aa).

The first 21 residues, 1 to 21 (MIVRRALALAALALAASPALA), serve as a signal peptide directing secretion. The disordered stretch occupies residues 411 to 434 (GDRQTPVTSGKTDLAAPAWGPLAP).

Belongs to the TolB family. In terms of assembly, the Tol-Pal system is composed of five core proteins: the inner membrane proteins TolA, TolQ and TolR, the periplasmic protein TolB and the outer membrane protein Pal. They form a network linking the inner and outer membranes and the peptidoglycan layer.

The protein resides in the periplasm. Its function is as follows. Part of the Tol-Pal system, which plays a role in outer membrane invagination during cell division and is important for maintaining outer membrane integrity. This is Tol-Pal system protein TolB from Anaeromyxobacter sp. (strain K).